Consider the following 368-residue polypeptide: DNA replication and repair protein RecF (368 aa).

ATP is bound at residue 30-37; it reads GRNGSGKT.

This sequence belongs to the RecF family.

It is found in the cytoplasm. In terms of biological role, the RecF protein is involved in DNA metabolism; it is required for DNA replication and normal SOS inducibility. RecF binds preferentially to single-stranded, linear DNA. It also seems to bind ATP. This is DNA replication and repair protein RecF from Chlorobaculum tepidum (strain ATCC 49652 / DSM 12025 / NBRC 103806 / TLS) (Chlorobium tepidum).